The sequence spans 419 residues: Transcription termination factor Rho (419 aa).

A Rho RNA-BD domain is found at 48-123 (GFTCSGTLEI…VRLDSINGDH (76 aa)). ATP-binding positions include 169-174 (GKGQRA), 181-186 (KIGKTV), and R212.

This sequence belongs to the Rho family. Homohexamer. The homohexamer assembles into an open ring structure.

Facilitates transcription termination by a mechanism that involves Rho binding to the nascent RNA, activation of Rho's RNA-dependent ATPase activity, and release of the mRNA from the DNA template. This chain is Transcription termination factor Rho, found in Neisseria gonorrhoeae.